Here is a 328-residue protein sequence, read N- to C-terminus: Mitochondrial GTPase 1 (328 aa).

The 190-residue stretch at 10–199 (KTTLKRLRDS…MVDTPGIMLP (190 aa)) folds into the CP-type G domain. Residues 57 to 60 (NKCD), 143 to 148 (NVGKSS), and Gly-195 contribute to the GTP site.

This sequence belongs to the TRAFAC class YlqF/YawG GTPase family. MTG1 subfamily.

It localises to the mitochondrion inner membrane. Functionally, mitochondrial GTPase involved in assembly of the large ribosomal subunit. Plays a role in expression of the mitochondrial translational machinery. This chain is Mitochondrial GTPase 1, found in Schizosaccharomyces japonicus (strain yFS275 / FY16936) (Fission yeast).